The sequence spans 401 residues: Argininosuccinate synthase (401 aa).

8-16 (AYSGGLDTS) is an ATP binding site. Tyrosine 87 serves as a coordination point for L-citrulline. ATP is bound at residue glycine 117. L-aspartate contacts are provided by threonine 119, asparagine 123, and aspartate 124. Asparagine 123 lines the L-citrulline pocket. Residues arginine 127, serine 175, glutamate 259, and tyrosine 271 each coordinate L-citrulline.

Belongs to the argininosuccinate synthase family. Type 1 subfamily. In terms of assembly, homotetramer.

The protein resides in the cytoplasm. It carries out the reaction L-citrulline + L-aspartate + ATP = 2-(N(omega)-L-arginino)succinate + AMP + diphosphate + H(+). It participates in amino-acid biosynthesis; L-arginine biosynthesis; L-arginine from L-ornithine and carbamoyl phosphate: step 2/3. This Paenarthrobacter aurescens (strain TC1) protein is Argininosuccinate synthase.